The primary structure comprises 105 residues: MAAKIRRNDEVIVLAGKDKGKKGKVTKVLATGKVIVEGINLVKKHQKPVPALGIQGGIVEQEAAIDVSNVAIFNAATGKADRIGFRFEDGQKVRFFKSNGETVSN.

This sequence belongs to the universal ribosomal protein uL24 family. Part of the 50S ribosomal subunit.

Functionally, one of two assembly initiator proteins, it binds directly to the 5'-end of the 23S rRNA, where it nucleates assembly of the 50S subunit. In terms of biological role, one of the proteins that surrounds the polypeptide exit tunnel on the outside of the subunit. In Vibrio vulnificus (strain YJ016), this protein is Large ribosomal subunit protein uL24.